A 238-amino-acid polypeptide reads, in one-letter code: MGEEAPEEYELGGGEDERVMEWETGLPGADELTPLSQPLVPAGLAAAFRIPPEPGRTLLDVHRASAATVSRLRRASSSSSSSFPAFASKGAGTGADEAESGGGADGGNGNTNNSSSKRARLVWTPQLHKRFVEVVAHLGMKNAVPKTIMQLMNVEGLTRENVASHLQKYRLYVKRMQGLSNEGPSPSDHIFASTPVPHASLHDQVPSPYHPHPHHHSYNNAAYAATVSSYHHYHHANH.

Positions 71-90 (RLRRASSSSSSSFPAFASKG) are enriched in low complexity. A disordered region spans residues 71–119 (RLRRASSSSSSSFPAFASKGAGTGADEAESGGGADGGNGNTNNSSSKRA). The segment covering 100 to 109 (SGGGADGGNG) has biased composition (gly residues). The myb-like GARP DNA-binding region spans 115–174 (SSKRARLVWTPQLHKRFVEVVAHLGMKNAVPKTIMQLMNVEGLTRENVASHLQKYRLYVK).

The protein resides in the nucleus. Its function is as follows. Transcription factor that is essential for the generation of the circadian clock oscillation. Binds to specific sites on CCA1 promoter leading to CCA1 activation. In Oryza sativa subsp. japonica (Rice), this protein is Transcription factor PCL1 (PCL1).